Here is a 246-residue protein sequence, read N- to C-terminus: ATP synthase subunit a, chloroplastic (246 aa).

Transmembrane regions (helical) follow at residues 35–55 (GQVFIVSWLVIAALIGFALVG), 94–114 (VPYIATVFLFIFGANWAGALI), 133–153 (INVTVALALLTSLSYFYAGLS), and 202–222 (VFALLVPILIPLPVMTLGLFA).

The protein belongs to the ATPase A chain family. F-type ATPases have 2 components, CF(1) - the catalytic core - and CF(0) - the membrane proton channel. CF(1) has five subunits: alpha(3), beta(3), gamma(1), delta(1), epsilon(1). CF(0) has four main subunits: a, b, b' and c.

It localises to the plastid. It is found in the chloroplast thylakoid membrane. Its function is as follows. Key component of the proton channel; it plays a direct role in the translocation of protons across the membrane. The protein is ATP synthase subunit a, chloroplastic of Rhodomonas salina (Cryptomonas salina).